A 260-amino-acid chain; its full sequence is Thiazole synthase (260 aa).

The active-site Schiff-base intermediate with DXP is Lys-96. Residues Gly-157, 184 to 185 (AG), and 206 to 207 (NT) each bind 1-deoxy-D-xylulose 5-phosphate.

This sequence belongs to the ThiG family. Homotetramer. Forms heterodimers with either ThiH or ThiS.

The protein resides in the cytoplasm. The catalysed reaction is [ThiS sulfur-carrier protein]-C-terminal-Gly-aminoethanethioate + 2-iminoacetate + 1-deoxy-D-xylulose 5-phosphate = [ThiS sulfur-carrier protein]-C-terminal Gly-Gly + 2-[(2R,5Z)-2-carboxy-4-methylthiazol-5(2H)-ylidene]ethyl phosphate + 2 H2O + H(+). It functions in the pathway cofactor biosynthesis; thiamine diphosphate biosynthesis. Its function is as follows. Catalyzes the rearrangement of 1-deoxy-D-xylulose 5-phosphate (DXP) to produce the thiazole phosphate moiety of thiamine. Sulfur is provided by the thiocarboxylate moiety of the carrier protein ThiS. In vitro, sulfur can be provided by H(2)S. The polypeptide is Thiazole synthase (Rhodopseudomonas palustris (strain BisA53)).